We begin with the raw amino-acid sequence, 204 residues long: Somatotropin (204 aa).

Positions 1–17 (MNSVVLLLSVVCLGVSS) are cleaved as a signal peptide. A Pyrrolidone carboxylic acid modification is found at glutamine 18. Histidine 36 contributes to the Zn(2+) binding site. Cysteine 69 and cysteine 177 are joined by a disulfide. Glutamate 186 is a Zn(2+) binding site. An intrachain disulfide couples cysteine 194 to cysteine 202.

Belongs to the somatotropin/prolactin family.

Its subcellular location is the secreted. Its function is as follows. Growth hormone plays an important role in growth control and involved in the regulation of several anabolic processes. This Oreochromis niloticus (Nile tilapia) protein is Somatotropin (gh).